A 360-amino-acid polypeptide reads, in one-letter code: MNKIISVWKKMNLIRKIGIGVVLGVLLGLIAPKITVIALFGSLFVGALKAIAPLLVLTLVAHALSQAPAGQKSNMRTVICLYLFGTFAAAFIAVGASYLFPIKLVLSTTTTTDITPPQGIAEVFQDLLLKVVDNPINALATANYIGVLTWAAVFGLAFRHASKTTKDLLQSTAEVISKVVGWIIGLAPFGIMGLVFDTIANNGLTALKDYGLLLLLLVGSMIFVALVVNPLIAFLVMKKNPYPLVFECLRVSGVTAFFTRSSAANIPVNMQLCKRLGVDPDTYSVSIPLGATINMAGAAITINILTMAAVHTLGISVDFSSALLLSVVASLSAAGASGVAGGSLLLIPVACSLFVVPYVV.

A run of 9 helical transmembrane segments spans residues 17–37 (IGIG…ITVI), 40–60 (FGSL…LTLV), 78–98 (VICL…GASY), 138–158 (ALAT…GLAF), 179–199 (VVGW…FDTI), 212–232 (LLLL…NPLI), 295–315 (MAGA…TLGI), 316–336 (SVDF…AAGA), and 339–359 (VAGG…VPYV).

The protein belongs to the dicarboxylate/amino acid:cation symporter (DAACS) (TC 2.A.23) family.

The protein resides in the cell membrane. It carries out the reaction L-serine(in) + Na(+)(in) = L-serine(out) + Na(+)(out). It catalyses the reaction L-threonine(in) + Na(+)(in) = L-threonine(out) + Na(+)(out). Functionally, involved in the import of serine and threonine into the cell, with the concomitant import of sodium (symport system). This is Serine/threonine transporter SstT from Streptococcus suis (strain 05ZYH33).